A 601-amino-acid chain; its full sequence is Elongation factor 4 (601 aa).

Residues 5 to 188 (SHIRNFAIIA…ALVLRLPPPT (184 aa)) form the tr-type G domain. Residues 17 to 22 (DHGKST) and 135 to 138 (NKID) each bind GTP.

The protein belongs to the TRAFAC class translation factor GTPase superfamily. Classic translation factor GTPase family. LepA subfamily.

The protein localises to the cell inner membrane. The catalysed reaction is GTP + H2O = GDP + phosphate + H(+). Required for accurate and efficient protein synthesis under certain stress conditions. May act as a fidelity factor of the translation reaction, by catalyzing a one-codon backward translocation of tRNAs on improperly translocated ribosomes. Back-translocation proceeds from a post-translocation (POST) complex to a pre-translocation (PRE) complex, thus giving elongation factor G a second chance to translocate the tRNAs correctly. Binds to ribosomes in a GTP-dependent manner. This is Elongation factor 4 from Rhodospirillum rubrum (strain ATCC 11170 / ATH 1.1.1 / DSM 467 / LMG 4362 / NCIMB 8255 / S1).